We begin with the raw amino-acid sequence, 464 residues long: Phosphoglucosamine mutase (464 aa).

The active-site Phosphoserine intermediate is S112. Mg(2+)-binding residues include S112, D252, D254, and D256. Residue S112 is modified to Phosphoserine.

It belongs to the phosphohexose mutase family. It depends on Mg(2+) as a cofactor. Post-translationally, activated by phosphorylation.

The enzyme catalyses alpha-D-glucosamine 1-phosphate = D-glucosamine 6-phosphate. Catalyzes the conversion of glucosamine-6-phosphate to glucosamine-1-phosphate. The chain is Phosphoglucosamine mutase from Synechococcus sp. (strain CC9605).